A 75-amino-acid polypeptide reads, in one-letter code: Small ribosomal subunit protein bS21A (75 aa).

The protein belongs to the bacterial ribosomal protein bS21 family.

The protein is Small ribosomal subunit protein bS21A (rpsU1) of Agrobacterium fabrum (strain C58 / ATCC 33970) (Agrobacterium tumefaciens (strain C58)).